The sequence spans 128 residues: Large ribosomal subunit protein eL32 (128 aa).

This sequence belongs to the eukaryotic ribosomal protein eL32 family.

This is Large ribosomal subunit protein eL32 (rpl32e) from Thermoplasma volcanium (strain ATCC 51530 / DSM 4299 / JCM 9571 / NBRC 15438 / GSS1).